We begin with the raw amino-acid sequence, 317 residues long: Probable GTP 3',8-cyclase (317 aa).

Residues Arg-4 to Arg-223 enclose the Radical SAM core domain. Arg-13 is a binding site for GTP. Residues Cys-20, Cys-24, and Cys-27 each contribute to the [4Fe-4S] cluster site. Lys-61 lines the GTP pocket. Gly-65 contacts S-adenosyl-L-methionine. Residue Thr-91 coordinates GTP. Ser-115 contacts S-adenosyl-L-methionine. Lys-152 is a binding site for GTP. The [4Fe-4S] cluster site is built by Cys-246 and Cys-249. Arg-251–Arg-253 is a binding site for GTP. Cys-263 serves as a coordination point for [4Fe-4S] cluster.

Belongs to the radical SAM superfamily. MoaA family. The cofactor is [4Fe-4S] cluster.

It catalyses the reaction GTP + AH2 + S-adenosyl-L-methionine = (8S)-3',8-cyclo-7,8-dihydroguanosine 5'-triphosphate + 5'-deoxyadenosine + L-methionine + A + H(+). The protein operates within cofactor biosynthesis; molybdopterin biosynthesis. In terms of biological role, catalyzes the cyclization of GTP to (8S)-3',8-cyclo-7,8-dihydroguanosine 5'-triphosphate. The polypeptide is Probable GTP 3',8-cyclase (Metallosphaera sedula (strain ATCC 51363 / DSM 5348 / JCM 9185 / NBRC 15509 / TH2)).